A 435-amino-acid polypeptide reads, in one-letter code: Cell adhesion molecule 2 (435 aa).

The signal sequence occupies residues 1–24 (MIWKRSAVLRFYSVCGLLLQGSQG). Topologically, residues 25–367 (QFPLTQNVTV…SLAGQNGPDH (343 aa)) are extracellular. Residues 27-119 (PLTQNVTVVE…PVKTSKAYLT (93 aa)) enclose the Ig-like V-type domain. Residues Asn31 and Asn51 are each glycosylated (N-linked (GlcNAc...) asparagine). 3 cysteine pairs are disulfide-bonded: Cys44-Cys104, Cys146-Cys203, and Cys248-Cys296. 2 consecutive Ig-like C2-type domains span residues 127–219 (PQIS…VAMQ) and 227–312 (PSVK…YVLI). A glycan (N-linked (GlcNAc...) asparagine) is linked at Asn291. Low complexity predominate over residues 337–351 (SVTITTSPSTSASSS). The tract at residues 337 to 360 (SVTITTSPSTSASSSSRRDPNSLA) is disordered. A helical transmembrane segment spans residues 368–388 (ALIGGIVAVVVFVTLCSIFLL). Topologically, residues 389 to 435 (GRYLARHKGTYLTNEAKGAEDAPDADTAIINAEGSQVNAEEKKEYFI) are cytoplasmic. The residue at position 423 (Ser423) is a Phosphoserine.

Belongs to the nectin family. Glycosylation at Asn-51 reduces adhesive binding.

It localises to the cell membrane. The protein localises to the synapse. It is found in the cell projection. The protein resides in the axon. Adhesion molecule that engages in homo- and heterophilic interactions with the other nectin-like family members, leading to cell aggregation. Important for synapse organization, providing regulated trans-synaptic adhesion. Preferentially binds to oligodendrocytes. The polypeptide is Cell adhesion molecule 2 (Cadm2) (Mus musculus (Mouse)).